We begin with the raw amino-acid sequence, 814 residues long: Microbial collagenase (814 aa).

The N-terminal stretch at 1–21 is a signal peptide; that stretch reads MELKILSVAIATTLTSTGVFA. The propeptide occupies 22–75; it reads LSEPVSQVTEQHAHSAHTHGVEFNRVEYQPTATLPIQPSKATRVQSLESLDESS. His477 lines the Zn(2+) pocket. Residue Glu478 is part of the active site. A Zn(2+)-binding site is contributed by His481. The PKD domain maps to 609 to 697; that stretch reads APNAVITANS…VVISALGGND (89 aa).

Belongs to the peptidase M9A family. Zn(2+) is required as a cofactor. Post-translationally, proteolytic cleavage might yield three different active forms.

The protein localises to the secreted. It carries out the reaction Digestion of native collagen in the triple helical region at Xaa-|-Gly bonds. With synthetic peptides, a preference is shown for Gly at P3 and P1', Pro and Ala at P2 and P2', and hydroxyproline, Ala or Arg at P3'.. This chain is Microbial collagenase, found in Vibrio alginolyticus.